We begin with the raw amino-acid sequence, 313 residues long: Endo-beta-N-acetylglucosaminidase H (313 aa).

Residues 1–42 (MFTPVRRRVRTAALALSAAAALVLGSTAASGASATPSPAPAP) constitute a signal peptide (or 44). A GH18 domain is found at 51–307 (PTSVAYVEVN…SAFTRELYGS (257 aa)). Glu-174 acts as the Proton donor in catalysis.

It belongs to the glycosyl hydrolase 18 family.

It catalyses the reaction an N(4)-(oligosaccharide-(1-&gt;3)-[oligosaccharide-(1-&gt;6)]-beta-D-Man-(1-&gt;4)-beta-D-GlcNAc-(1-&gt;4)-alpha-D-GlcNAc)-L-asparaginyl-[protein] + H2O = an oligosaccharide-(1-&gt;3)-[oligosaccharide-(1-&gt;6)]-beta-D-Man-(1-&gt;4)-D-GlcNAc + N(4)-(N-acetyl-beta-D-glucosaminyl)-L-asparaginyl-[protein]. Cleaves asparagine-linked oligomannose and hybrid, but not complex, oligosaccharides from glycoproteins. The polypeptide is Endo-beta-N-acetylglucosaminidase H (Streptomyces plicatus).